Consider the following 299-residue polypeptide: Deoxyribonuclease-1-like 2 (299 aa).

The signal sequence occupies residues 1 to 20 (MGGPRALLAALWALEAAGTA). Catalysis depends on residues Glu99 and His170. Cys209 and Cys245 form a disulfide bridge.

This sequence belongs to the DNase I family. Requires Mg(2+) as cofactor. Ca(2+) is required as a cofactor. As to expression, preferentially expressed in the skin and up-regulated during keratinocytes differentiation. Highly abundant (at protein level) in the stratum granulosum.

It is found in the cytoplasm. It localises to the secreted. In terms of biological role, divalent cation-dependent acid DNA endonuclease involved in the breakdown of the nucleus during corneocyte formation of epidermal keratinocytes. May play an immune role by eliminating harmful DNA released into the extracellular environment by damaged epidermal cells. The polypeptide is Deoxyribonuclease-1-like 2 (DNASE1L2) (Homo sapiens (Human)).